We begin with the raw amino-acid sequence, 415 residues long: MSLQAPKGTKDLLPTESYKWQYLENKFRNIAADFGCREIRTPVFEYTELFQRGVGETTDVVQKEMYTFEDKAGRSITLKPEGTSPAVRAFVEGRLFNETQPTKMYYFTPVMRYENVQKGRLRQHHQFGIEIFGAKDASVDAEVISIPVGIYKELGVEGVELNINSIGCPKCRKTYNEALKKYLSKNYDKLCSTCKTRFDKNPLRILDCKVDTCKEIVKDAPIILDYICDECKDHFESLKSYLDVLDIKYKVDPFIVRGLDYYSKTVFEFIIDDITICAGGRYDYLIEEIGGPSMPAVGFGMGIERLLLTLQEKAIEIPEEAYVDLYLGNMGDKAKLEVLKLAKELRDRHIKCEIDHMGKSVKAQMKYANRIGAKYSMVLGEEELNTGKVSLKRMEDGKQIEVDIKEIDTLIKVFK.

This sequence belongs to the class-II aminoacyl-tRNA synthetase family. As to quaternary structure, homodimer.

The protein resides in the cytoplasm. It catalyses the reaction tRNA(His) + L-histidine + ATP = L-histidyl-tRNA(His) + AMP + diphosphate + H(+). This chain is Histidine--tRNA ligase, found in Clostridium botulinum (strain Okra / Type B1).